The sequence spans 51 residues: Insulin-1 (51 aa).

Intrachain disulfides connect cysteine 8/cysteine 37, cysteine 20/cysteine 50, and cysteine 36/cysteine 41.

Belongs to the insulin family. As to quaternary structure, heterodimer of a B chain and an A chain linked by two disulfide bonds.

It is found in the secreted. Insulin decreases blood glucose concentration. It increases cell permeability to monosaccharides, amino acids and fatty acids. It accelerates glycolysis, the pentose phosphate cycle, and glycogen synthesis in liver. The polypeptide is Insulin-1 (ins1) (Batrachoididae sp. (Toadfish)).